We begin with the raw amino-acid sequence, 457 residues long: TnpB-like protein ORF457 (457 aa).

A disordered region spans residues 1 to 22; sequence MPPSSGQLLGDEEREPTSTPAI.

The protein in the N-terminal section; belongs to the transposase 2 family. It in the C-terminal section; belongs to the transposase 35 family.

This is TnpB-like protein ORF457 from Acidianus two-tailed virus (ATV).